Reading from the N-terminus, the 70-residue chain is MTRLLMLLVRFYQRYLSPLKGGPTCRFTPSCSQYAYEALAKYGAIKGTWLAVRRVLRCHPFHPGGYDPVP.

The protein belongs to the UPF0161 family.

It is found in the cell membrane. Functionally, could be involved in insertion of integral membrane proteins into the membrane. This chain is Putative membrane protein insertion efficiency factor, found in Symbiobacterium thermophilum (strain DSM 24528 / JCM 14929 / IAM 14863 / T).